The primary structure comprises 258 residues: Synapse differentiation-inducing gene protein 1 (258 aa).

The Cytoplasmic segment spans residues 1–181 (MDGIIEQKSM…NFLMMPPRDH (181 aa)). Phosphoserine is present on S137. A helical membrane pass occupies residues 182-202 (LGLSVFSMLCCFWPLGIAAFY). The Extracellular segment spans residues 203-228 (LSHETNKAVAKGDLHQASTSSRRALF). Residues 229–249 (LAVLSITIGTGVYVGVAVALI) constitute an intramembrane region (helical). The Extracellular segment spans residues 250–258 (AYLSKNNHL).

The protein belongs to the CD225/Dispanin family. In terms of assembly, homodimer. Interacts with GRIA1 and GRIA2.

It localises to the cell membrane. The protein localises to the early endosome membrane. It is found in the postsynaptic density membrane. The protein resides in the synapse. Its subcellular location is the cell projection. It localises to the dendrite. The protein localises to the dendritic spine. May regulate AMPA receptor content at nascent synapses, and have a role in postsynaptic development and maturation. The sequence is that of Synapse differentiation-inducing gene protein 1 (SYNDIG1) from Homo sapiens (Human).